A 183-amino-acid chain; its full sequence is Oleosin 5 (183 aa).

The polar stretch occupies residues 1 to 39 (MADVRTHSHQLQVHPQRQHEGGIKVLYPQSGPSSTQVLA). Transmembrane regions (helical) follow at residues 37-57 (VLAVFVGVPIGGTLLTIAGLT), 66-86 (MLAFPLFLIFSPVIVPAAFVI), and 87-107 (GLAMTGFLASGAIGLTGLSSM). Positions 40-113 (VFVGVPIGGT…LSSMSWVLNY (74 aa)) are hydrophobic. The interval 144 to 183 (KDAGQTIEDKAHDVREAKTFDVRDRDTTKGTHNVRDTKTT) is disordered.

It belongs to the oleosin family.

It localises to the lipid droplet. The protein resides in the membrane. In terms of biological role, may have a structural role to stabilize the lipid body during desiccation of the seed by preventing coalescence of the oil. Probably interacts with both lipid and phospholipid moieties of lipid bodies. May also provide recognition signals for specific lipase anchorage in lipolysis during seedling growth. This chain is Oleosin 5, found in Arabidopsis thaliana (Mouse-ear cress).